Here is a 229-residue protein sequence, read N- to C-terminus: N-(5'-phosphoribosyl)anthranilate isomerase (229 aa).

It belongs to the TrpF family.

The enzyme catalyses N-(5-phospho-beta-D-ribosyl)anthranilate = 1-(2-carboxyphenylamino)-1-deoxy-D-ribulose 5-phosphate. It participates in amino-acid biosynthesis; L-tryptophan biosynthesis; L-tryptophan from chorismate: step 3/5. The protein is N-(5'-phosphoribosyl)anthranilate isomerase of Clostridium beijerinckii (strain ATCC 51743 / NCIMB 8052) (Clostridium acetobutylicum).